We begin with the raw amino-acid sequence, 49 residues long: Turripeptide OL47 (49 aa).

A disordered region spans residues 28–49 (RSDTEKKCTGGPDPCPPRQWPD). Positions 40–49 (DPCPPRQWPD) are enriched in pro residues.

In terms of processing, contains 4 disulfide bonds. Expressed by the venom duct.

It is found in the secreted. Its function is as follows. Acts as a neurotoxin by inhibiting an ion channel. The polypeptide is Turripeptide OL47 (Iotyrris olangoensis (Sea snail)).